A 726-amino-acid chain; its full sequence is Catalase-peroxidase (726 aa).

The signal sequence occupies residues 1–16; that stretch reads MDNPTDSAGKCPVAHG. The disordered stretch occupies residues 1-26; that stretch reads MDNPTDSAGKCPVAHGNTPRSRSNRD. Positions 96 to 218 form a cross-link, tryptophyl-tyrosyl-methioninium (Trp-Tyr) (with M-244); sequence WHSAGTYRIT…LGAVQMGLIY (123 aa). The Proton acceptor role is filled by H97. Residues 218–244 constitute a cross-link (tryptophyl-tyrosyl-methioninium (Tyr-Met) (with W-96)); that stretch reads YVNPEGPNGTPDPLASARDIRETFARM. Position 259 (H259) interacts with heme b.

This sequence belongs to the peroxidase family. Peroxidase/catalase subfamily. Homodimer or homotetramer. Heme b is required as a cofactor. Post-translationally, formation of the three residue Trp-Tyr-Met cross-link is important for the catalase, but not the peroxidase activity of the enzyme.

The enzyme catalyses H2O2 + AH2 = A + 2 H2O. It carries out the reaction 2 H2O2 = O2 + 2 H2O. Functionally, bifunctional enzyme with both catalase and broad-spectrum peroxidase activity. This chain is Catalase-peroxidase, found in Rhizobium johnstonii (strain DSM 114642 / LMG 32736 / 3841) (Rhizobium leguminosarum bv. viciae).